Here is a 77-residue protein sequence, read N- to C-terminus: Acyl carrier protein (77 aa).

The region spanning 1-75 (MVFEKVKDII…DVVNYIKAHT (75 aa)) is the Carrier domain. Ser-35 is subject to O-(pantetheine 4'-phosphoryl)serine.

The protein belongs to the acyl carrier protein (ACP) family. 4'-phosphopantetheine is transferred from CoA to a specific serine of apo-ACP by AcpS. This modification is essential for activity because fatty acids are bound in thioester linkage to the sulfhydryl of the prosthetic group.

It localises to the cytoplasm. Its pathway is lipid metabolism; fatty acid biosynthesis. Carrier of the growing fatty acid chain in fatty acid biosynthesis. The protein is Acyl carrier protein of Clostridium acetobutylicum (strain ATCC 824 / DSM 792 / JCM 1419 / IAM 19013 / LMG 5710 / NBRC 13948 / NRRL B-527 / VKM B-1787 / 2291 / W).